Reading from the N-terminus, the 73-residue chain is MKSAIHPDYHTIKVVMTDGTEYTTRSTWGKEGDTMNLDIDPTTHPAWTGGQQTLLDRGGRLSKFKKRFEGFGL.

This sequence belongs to the bacterial ribosomal protein bL31 family. Type A subfamily. In terms of assembly, part of the 50S ribosomal subunit.

In terms of biological role, binds the 23S rRNA. This Mesorhizobium japonicum (strain LMG 29417 / CECT 9101 / MAFF 303099) (Mesorhizobium loti (strain MAFF 303099)) protein is Large ribosomal subunit protein bL31.